A 512-amino-acid chain; its full sequence is N-fatty-acyl-amino acid synthase/hydrolase PM20D1 (512 aa).

A signal peptide spans 1 to 34 (MAVSRWKAVGSTLLAAFLVGLVVLIAVLLIRTYT). 2 N-linked (GlcNAc...) asparagine glycosylation sites follow: N45 and N81. Position 134 (H134) interacts with Zn(2+). D136 is a catalytic residue. D166 is a Zn(2+) binding site. Residue E200 is the Proton acceptor of the active site. The Zn(2+) site is built by E201 and D227. Residue N450 is glycosylated (N-linked (GlcNAc...) asparagine). H472 lines the Zn(2+) pocket.

Belongs to the peptidase M20A family.

Its subcellular location is the secreted. The catalysed reaction is an N-acyl-L-amino acid + H2O = an L-alpha-amino acid + a carboxylate. The enzyme catalyses an N-acyl-aromatic L-alpha-amino acid + H2O = an aromatic L-alpha-amino acid + a carboxylate. It catalyses the reaction N-(5Z,8Z,11Z,14Z)-eicosatetraenoyl-glycine + H2O = (5Z,8Z,11Z,14Z)-eicosatetraenoate + glycine. It carries out the reaction N-hexadecanoyl-L-phenylalanine + H2O = hexadecanoate + L-phenylalanine. The catalysed reaction is N-octadecanoyl-L-phenylalanine + H2O = octadecanoate + L-phenylalanine. The enzyme catalyses N-(4Z,7Z,10Z,13Z,16Z,19Z-docosahexaenoyl)-L-phenylalanine + H2O = (4Z,7Z,10Z,13Z,16Z,19Z)-docosahexaenoate + L-phenylalanine. It catalyses the reaction N-(9Z-octadecenoyl)-L-asparagine + H2O = L-asparagine + (9Z)-octadecenoate. It carries out the reaction (9Z)-octadecenoate + glycine = N-(9Z-octadecenoyl)glycine + H2O. The catalysed reaction is N-(9Z-octadecenoyl)-L-lysine + H2O = L-lysine + (9Z)-octadecenoate. The enzyme catalyses N-(9Z-octadecenoyl)-L-methionine + H2O = (9Z)-octadecenoate + L-methionine. It catalyses the reaction N-(9Z-octadecenoyl)-L-serine + H2O = L-serine + (9Z)-octadecenoate. It carries out the reaction N-(9Z-octadecenoyl)-L-tryptophan + H2O = L-tryptophan + (9Z)-octadecenoate. The catalysed reaction is N-(9Z-octadecenoyl)-L-tyrosine + H2O = L-tyrosine + (9Z)-octadecenoate. The enzyme catalyses N-(9Z-octadecenoyl)-L-glutamine + H2O = L-glutamine + (9Z)-octadecenoate. It catalyses the reaction N-(5Z,8Z,11Z,14Z-eicosatetraenoyl)-L-serine + H2O = (5Z,8Z,11Z,14Z)-eicosatetraenoate + L-serine. It carries out the reaction (5Z,8Z,11Z,14Z)-eicosatetraenoate + L-phenylalanine = N-(5Z,8Z,11Z,14Z-eicosatetraenoyl)-L-phenylalanine + H2O. The catalysed reaction is N-(9Z-octadecenoyl)-L-leucine + H2O = L-leucine + (9Z)-octadecenoate. The enzyme catalyses L-phenylalanine + (9Z)-octadecenoate = N-(9Z-octadecenoyl)-L-phenylalanine + H2O. Its pathway is amino-acid metabolism. It participates in energy metabolism; electron transfer. It functions in the pathway lipid metabolism; fatty acid metabolism. With respect to regulation, lipoproteins are powerful coactivators of PM20D1 activity in vitro and NAA biosynthesis in vivo. Functionally, secreted enzyme that regulates the endogenous N-fatty acyl amino acid (NAAs) tissue and circulating levels by functioning as a bidirectional NAA synthase/hydrolase. It condenses free fatty acids and free amino acids to generate NAAs and bidirectionally catalyzes the reverse hydrolysis reaction. Some of these NAAs stimulate oxidative metabolism via mitochondrial uncoupling, increasing energy expenditure in a UPC1-independent manner. Thereby, this secreted protein may indirectly regulate whole body energy expenditure. PM20D1 circulates in tight association with both low- and high-density (LDL and HDL,respectively) lipoprotein particles. The sequence is that of N-fatty-acyl-amino acid synthase/hydrolase PM20D1 from Xenopus tropicalis (Western clawed frog).